The sequence spans 259 residues: DNA-directed RNA polymerase subunit Rpo3 (259 aa).

Belongs to the archaeal Rpo3/eukaryotic RPB3 RNA polymerase subunit family. In terms of assembly, part of the RNA polymerase complex.

Its subcellular location is the cytoplasm. It catalyses the reaction RNA(n) + a ribonucleoside 5'-triphosphate = RNA(n+1) + diphosphate. Functionally, DNA-dependent RNA polymerase (RNAP) catalyzes the transcription of DNA into RNA using the four ribonucleoside triphosphates as substrates. The protein is DNA-directed RNA polymerase subunit Rpo3 of Pyrobaculum arsenaticum (strain DSM 13514 / JCM 11321 / PZ6).